Consider the following 463-residue polypeptide: ATP-dependent protease ATPase subunit HslU (463 aa).

ATP is bound by residues Val21, 63-68 (GVGKTE), Asp276, Glu341, and Arg413.

It belongs to the ClpX chaperone family. HslU subfamily. In terms of assembly, a double ring-shaped homohexamer of HslV is capped on each side by a ring-shaped HslU homohexamer. The assembly of the HslU/HslV complex is dependent on binding of ATP.

It localises to the cytoplasm. Functionally, ATPase subunit of a proteasome-like degradation complex; this subunit has chaperone activity. The binding of ATP and its subsequent hydrolysis by HslU are essential for unfolding of protein substrates subsequently hydrolyzed by HslV. HslU recognizes the N-terminal part of its protein substrates and unfolds these before they are guided to HslV for hydrolysis. This is ATP-dependent protease ATPase subunit HslU from Thermotoga neapolitana (strain ATCC 49049 / DSM 4359 / NBRC 107923 / NS-E).